A 279-amino-acid chain; its full sequence is Tryptophan synthase alpha chain (279 aa).

Residues glutamate 50 and aspartate 61 each act as proton acceptor in the active site.

Belongs to the TrpA family. In terms of assembly, tetramer of two alpha and two beta chains.

The catalysed reaction is (1S,2R)-1-C-(indol-3-yl)glycerol 3-phosphate + L-serine = D-glyceraldehyde 3-phosphate + L-tryptophan + H2O. It functions in the pathway amino-acid biosynthesis; L-tryptophan biosynthesis; L-tryptophan from chorismate: step 5/5. Its function is as follows. The alpha subunit is responsible for the aldol cleavage of indoleglycerol phosphate to indole and glyceraldehyde 3-phosphate. The protein is Tryptophan synthase alpha chain of Brucella abortus (strain S19).